Here is a 177-residue protein sequence, read N- to C-terminus: B-phycoerythrin beta chain (177 aa).

Residues C50 and C61 each contribute to the phycourobilin site. The residue at position 72 (N72) is an N4-methylasparagine. C82 and C158 together coordinate (2R,3E)-phycoerythrobilin.

Belongs to the phycobiliprotein family. Heteromer of 6 alpha, 6 beta and one gamma chain. Contains two covalently linked phycoerythrobilin chromophores and one covalently linked phycourobilin chromophore.

It localises to the plastid. It is found in the chloroplast thylakoid membrane. Light-harvesting photosynthetic bile pigment-protein from the phycobiliprotein complex. In Porphyridium sordidum (Red alga), this protein is B-phycoerythrin beta chain (cpeB).